Here is a 166-residue protein sequence, read N- to C-terminus: Probable glucosamine 6-phosphate N-acetyltransferase 2 (166 aa).

Positions V21–F166 constitute an N-acetyltransferase domain. Substrate-binding positions include S43, K93–R96, and E105–V107. G115–L120 serves as a coordination point for acetyl-CoA. Residue Y136–K137 coordinates substrate. Y150 to K152 is an acetyl-CoA binding site.

It belongs to the acetyltransferase family. GNA1 subfamily. In terms of assembly, homodimer.

The protein localises to the endoplasmic reticulum membrane. It catalyses the reaction D-glucosamine 6-phosphate + acetyl-CoA = N-acetyl-D-glucosamine 6-phosphate + CoA + H(+). It participates in nucleotide-sugar biosynthesis; UDP-N-acetyl-alpha-D-glucosamine biosynthesis; N-acetyl-alpha-D-glucosamine 1-phosphate from alpha-D-glucosamine 6-phosphate (route I): step 1/2. Its function is as follows. Acetyltransferase involved in UDP-N-acetylglucosamine (UDP-GlcNAc) biosynthesis. UDP-GlcNAc is an essential metabolite that serves as an initial sugar donor of N-glycan synthesis and thus plays an important role in protein and lipid glycosylation. This chain is Probable glucosamine 6-phosphate N-acetyltransferase 2, found in Oryza sativa subsp. japonica (Rice).